Reading from the N-terminus, the 348-residue chain is Histidinol-phosphate aminotransferase (348 aa).

At lysine 210 the chain carries N6-(pyridoxal phosphate)lysine.

This sequence belongs to the class-II pyridoxal-phosphate-dependent aminotransferase family. Histidinol-phosphate aminotransferase subfamily. In terms of assembly, homodimer. Pyridoxal 5'-phosphate is required as a cofactor.

It carries out the reaction L-histidinol phosphate + 2-oxoglutarate = 3-(imidazol-4-yl)-2-oxopropyl phosphate + L-glutamate. It participates in amino-acid biosynthesis; L-histidine biosynthesis; L-histidine from 5-phospho-alpha-D-ribose 1-diphosphate: step 7/9. This Pseudomonas putida (strain W619) protein is Histidinol-phosphate aminotransferase.